Here is a 233-residue protein sequence, read N- to C-terminus: Protein-methionine-sulfoxide reductase heme-binding subunit MsrQ (233 aa).

6 helical membrane passes run 13 to 33, 44 to 64, 81 to 101, 117 to 137, 151 to 171, and 174 to 194; these read IKAA…HGLW, ALTR…LCVS, MLGL…LWLD, PFIT…LTSS, SLHR…LWLV, and VALL…GWRV. The region spanning 50–164 is the Ferric oxidoreductase domain; sequence GIWTLNFLFL…AVYAVAILGV (115 aa).

The protein belongs to the MsrQ family. Heterodimer of a catalytic subunit (MsrP) and a heme-binding subunit (MsrQ).

It is found in the cell inner membrane. Part of the MsrPQ system that repairs oxidized periplasmic proteins containing methionine sulfoxide residues (Met-O), using respiratory chain electrons. Thus protects these proteins from oxidative-stress damage caused by reactive species of oxygen and chlorine generated by the host defense mechanisms. MsrPQ is essential for the maintenance of envelope integrity under bleach stress, rescuing a wide series of structurally unrelated periplasmic proteins from methionine oxidation. MsrQ provides electrons for reduction to the reductase catalytic subunit MsrP, using the quinone pool of the respiratory chain. Probably involved in protection against reactive chlorine species (RCS) generated by chlorite and hypochlorite. The protein is Protein-methionine-sulfoxide reductase heme-binding subunit MsrQ of Azospira oryzae (strain ATCC BAA-33 / DSM 13638 / PS) (Dechlorosoma suillum).